Reading from the N-terminus, the 135-residue chain is MLSPKRTRFRKQHRGRMKGISYRGNRICFGRYALQALEPAWITSRQIEAGRRAMTRNVRRGGKIWVRIFPDKPVTVRPTETRMGSGKGSPEYWVAVVKPGRILYEMGGVAENIARKAISIAASKMPIRTQFIISG.

Belongs to the universal ribosomal protein uL16 family. In terms of assembly, part of the 50S ribosomal subunit.

It localises to the plastid. Its subcellular location is the chloroplast. This chain is Large ribosomal subunit protein uL16c, found in Vitis vinifera (Grape).